A 372-amino-acid polypeptide reads, in one-letter code: Chaperone protein DnaJ (372 aa).

Residues 5–70 (DYYEVLGVAK…DKRAAYDQFG (66 aa)) form the J domain. Residues 133-211 (GTETKIRIPT…CHGEGRVKKH (79 aa)) form a CR-type zinc finger. Zn(2+)-binding residues include cysteine 146, cysteine 149, cysteine 163, cysteine 166, cysteine 185, cysteine 188, cysteine 199, and cysteine 202. 4 CXXCXGXG motif repeats span residues 146–153 (CGTCHGSG), 163–170 (CSACGGHG), 185–192 (CPRCGGTG), and 199–206 (CPSCHGEG).

Belongs to the DnaJ family. Homodimer. Requires Zn(2+) as cofactor.

Its subcellular location is the cytoplasm. Participates actively in the response to hyperosmotic and heat shock by preventing the aggregation of stress-denatured proteins and by disaggregating proteins, also in an autonomous, DnaK-independent fashion. Unfolded proteins bind initially to DnaJ; upon interaction with the DnaJ-bound protein, DnaK hydrolyzes its bound ATP, resulting in the formation of a stable complex. GrpE releases ADP from DnaK; ATP binding to DnaK triggers the release of the substrate protein, thus completing the reaction cycle. Several rounds of ATP-dependent interactions between DnaJ, DnaK and GrpE are required for fully efficient folding. Also involved, together with DnaK and GrpE, in the DNA replication of plasmids through activation of initiation proteins. The sequence is that of Chaperone protein DnaJ from Thiobacillus denitrificans (strain ATCC 25259 / T1).